A 30-amino-acid polypeptide reads, in one-letter code: GLPTCGETCFGGTCNTPGCTCDPWPVCTHN.

Positions 1–30 (GLPTCGETCFGGTCNTPGCTCDPWPVCTHN) form a cross-link, cyclopeptide (Gly-Asn). 3 disulfide bridges follow: C5/C19, C9/C21, and C14/C27.

Post-translationally, this is a cyclic peptide. In terms of tissue distribution, expressed in leaves but not in petals, petioles, roots and runners (at protein level).

Its function is as follows. Probably participates in a plant defense mechanism. Has hemolytic activity. This chain is Cycloviolacin-O24, found in Viola odorata (Sweet violet).